Reading from the N-terminus, the 119-residue chain is Large ribosomal subunit protein uL24 (119 aa).

This sequence belongs to the universal ribosomal protein uL24 family. As to quaternary structure, part of the 50S ribosomal subunit.

One of two assembly initiator proteins, it binds directly to the 5'-end of the 23S rRNA, where it nucleates assembly of the 50S subunit. Functionally, located at the polypeptide exit tunnel on the outside of the subunit. The chain is Large ribosomal subunit protein uL24 from Methanococcus maripaludis (strain DSM 14266 / JCM 13030 / NBRC 101832 / S2 / LL).